The primary structure comprises 299 residues: Virginiamycin B lyase (299 aa).

Position 229 (histidine 229) interacts with substrate. Position 269 (glutamate 269) interacts with Mg(2+). Residue histidine 271 is the Proton acceptor of the active site. Mg(2+) is bound at residue glutamate 286.

This sequence belongs to the Vgb family. As to quaternary structure, monomer. It depends on Mg(2+) as a cofactor.

Inactivates the type B streptogramin antibiotics by linearizing the lactone ring at the ester linkage, generating a free phenylglycine carboxylate and converting the threonyl moiety into 2-amino-butenoic acid. The chain is Virginiamycin B lyase from Bordetella bronchiseptica (strain ATCC BAA-588 / NCTC 13252 / RB50) (Alcaligenes bronchisepticus).